The chain runs to 311 residues: tRNA dimethylallyltransferase (311 aa).

14–21 serves as a coordination point for ATP; it reads GPTAVGKT. 16–21 provides a ligand contact to substrate; that stretch reads TAVGKT. The tract at residues 39–42 is interaction with substrate tRNA; the sequence is DSMQ.

The protein belongs to the IPP transferase family. As to quaternary structure, monomer. Mg(2+) serves as cofactor.

The enzyme catalyses adenosine(37) in tRNA + dimethylallyl diphosphate = N(6)-dimethylallyladenosine(37) in tRNA + diphosphate. Its function is as follows. Catalyzes the transfer of a dimethylallyl group onto the adenine at position 37 in tRNAs that read codons beginning with uridine, leading to the formation of N6-(dimethylallyl)adenosine (i(6)A). The polypeptide is tRNA dimethylallyltransferase (Lactiplantibacillus plantarum (strain ATCC BAA-793 / NCIMB 8826 / WCFS1) (Lactobacillus plantarum)).